The sequence spans 76 residues: uncharacterized protein (76 aa).

A helical transmembrane segment spans residues Ile-40 to Gln-60.

The protein localises to the membrane. This is an uncharacterized protein from Dictyostelium discoideum (Social amoeba).